We begin with the raw amino-acid sequence, 199 residues long: Protein-methionine-sulfoxide reductase heme-binding subunit MsrQ (199 aa).

Helical transmembrane passes span 13 to 33 (VLLHLAGFLPLLWLILSVDQG), 79 to 99 (LLGLWCFFWATLHLVSYALLE), 120 to 140 (LGIISWLILLALAVTSPQIMM), 147 to 167 (WQKLHNFVYLVAILTPIHYLW), and 169 to 189 (VKTLSPQPILYALAALILLLL).

This sequence belongs to the MsrQ family. In terms of assembly, heterodimer of a catalytic subunit (MsrP) and a heme-binding subunit (MsrQ). FMN serves as cofactor. Heme b is required as a cofactor.

The protein localises to the cell inner membrane. Functionally, part of the MsrPQ system that repairs oxidized periplasmic proteins containing methionine sulfoxide residues (Met-O), using respiratory chain electrons. Thus protects these proteins from oxidative-stress damage caused by reactive species of oxygen and chlorine generated by the host defense mechanisms. MsrPQ is essential for the maintenance of envelope integrity under bleach stress, rescuing a wide series of structurally unrelated periplasmic proteins from methionine oxidation. MsrQ provides electrons for reduction to the reductase catalytic subunit MsrP, using the quinone pool of the respiratory chain. The sequence is that of Protein-methionine-sulfoxide reductase heme-binding subunit MsrQ from Pectobacterium atrosepticum (strain SCRI 1043 / ATCC BAA-672) (Erwinia carotovora subsp. atroseptica).